A 122-amino-acid polypeptide reads, in one-letter code: Large ribosomal subunit protein bL12 (122 aa).

It belongs to the bacterial ribosomal protein bL12 family. Homodimer. Part of the ribosomal stalk of the 50S ribosomal subunit. Forms a multimeric L10(L12)X complex, where L10 forms an elongated spine to which 2 to 4 L12 dimers bind in a sequential fashion. Binds GTP-bound translation factors.

Forms part of the ribosomal stalk which helps the ribosome interact with GTP-bound translation factors. Is thus essential for accurate translation. In Aliivibrio fischeri (strain ATCC 700601 / ES114) (Vibrio fischeri), this protein is Large ribosomal subunit protein bL12.